The chain runs to 116 residues: Ribosome-binding factor A (116 aa).

This sequence belongs to the RbfA family. As to quaternary structure, monomer. Binds 30S ribosomal subunits, but not 50S ribosomal subunits or 70S ribosomes.

Its subcellular location is the cytoplasm. In terms of biological role, one of several proteins that assist in the late maturation steps of the functional core of the 30S ribosomal subunit. Associates with free 30S ribosomal subunits (but not with 30S subunits that are part of 70S ribosomes or polysomes). Required for efficient processing of 16S rRNA. May interact with the 5'-terminal helix region of 16S rRNA. The polypeptide is Ribosome-binding factor A (Chlorobium phaeobacteroides (strain DSM 266 / SMG 266 / 2430)).